A 347-amino-acid chain; its full sequence is Quinolinate synthase (347 aa).

2 residues coordinate iminosuccinate: H47 and S68. A [4Fe-4S] cluster-binding site is contributed by C113. Residues 139 to 141 (YAN) and S156 contribute to the iminosuccinate site. C200 contributes to the [4Fe-4S] cluster binding site. Residues 226-228 (HPE) and T243 each bind iminosuccinate. C297 is a binding site for [4Fe-4S] cluster.

Belongs to the quinolinate synthase family. Type 1 subfamily. The cofactor is [4Fe-4S] cluster.

Its subcellular location is the cytoplasm. It catalyses the reaction iminosuccinate + dihydroxyacetone phosphate = quinolinate + phosphate + 2 H2O + H(+). Its pathway is cofactor biosynthesis; NAD(+) biosynthesis; quinolinate from iminoaspartate: step 1/1. Its function is as follows. Catalyzes the condensation of iminoaspartate with dihydroxyacetone phosphate to form quinolinate. The protein is Quinolinate synthase of Escherichia coli O127:H6 (strain E2348/69 / EPEC).